The chain runs to 136 residues: Large ribosomal subunit protein uL16 (136 aa).

This sequence belongs to the universal ribosomal protein uL16 family. Part of the 50S ribosomal subunit.

Binds 23S rRNA and is also seen to make contacts with the A and possibly P site tRNAs. The protein is Large ribosomal subunit protein uL16 of Shewanella denitrificans (strain OS217 / ATCC BAA-1090 / DSM 15013).